Reading from the N-terminus, the 240-residue chain is TATA-box-binding protein (240 aa).

The disordered stretch occupies residues 21-61; the sequence is NTRQVWENQNRDGTKPATTFQSEEDIKRAAPESEKDTSATS. Basic and acidic residues predominate over residues 44 to 57; the sequence is EDIKRAAPESEKDT. A run of 2 repeats spans residues 67–143 and 157–234.

This sequence belongs to the TBP family. In terms of assembly, binds DNA as monomer. The 1.2 MDa TFIID complex is composed of TATA binding protein (TBP) and the 14 TBP-associated factors. One copy of each TAF1, TAF2, TAF3, TAF7, TAF8, TAF11, TAF13, two copies of each TAF4, TAF5, TAF6, TAF9, TAF10, TAF12, and three copies of TAF14. Interacts with TFC8.

The protein resides in the nucleus. General transcription factor that functions at the core of the DNA-binding general transcription factor complex TFIID. Binding of TFIID to a promoter (with or without TATA element) is the initial step in preinitiation complex (PIC) formation. TFIID plays a key role in the regulation of gene expression by RNA polymerase II through different activities such as transcription activator interaction, core promoter recognition and selectivity, TFIIA and TFIIB interaction, chromatin modification (histone acetylation by TAF1), facilitation of DNA opening and initiation of transcription. The protein is TATA-box-binding protein (SPT15) of Saccharomyces cerevisiae (strain ATCC 204508 / S288c) (Baker's yeast).